Reading from the N-terminus, the 152-residue chain is Protein ripply3 (152 aa).

Residues 1–24 show a composition bias toward basic and acidic residues; the sequence is MRPEAAGVREARGRLCHCPGDDPG. 2 disordered regions span residues 1–76 and 113–152; these read MRPE…GAFG and FYNDDSESGSEEEQEEEAQPNHLQCLEAEVRDSAQEERAE. The WRPW motif signature appears at 40-43; sequence WRPW. Residues 79-114 are ripply homology domain; it reads HPVRLYLPVSKRQEYLQSSGEKVLASFPVQATIHFY. Acidic residues predominate over residues 116 to 130; the sequence is DDSESGSEEEQEEEA. Basic and acidic residues predominate over residues 140 to 152; it reads AEVRDSAQEERAE.

Belongs to the ripply family. Interacts with TBX1.

It localises to the nucleus. Its function is as follows. Acts as a transcriptional corepressor. Negative regulator of the transcriptional activity of TBX1. Plays a role in the development of the pharyngeal apparatus and derivatives. The sequence is that of Protein ripply3 (Ripply3) from Mus musculus (Mouse).